The primary structure comprises 935 residues: Transmembrane channel-like protein 1 (935 aa).

Disordered regions lie at residues 1-21 (MPRH…DEGK) and 37-204 (ERGK…LGSL). Basic and acidic residues-rich tracts occupy residues 37–47 (ERGKIKQASRD), 54–79 (RNGE…EKKH), 109–136 (DKSS…EKDV), 152–163 (NHEKTKQHLKEE), and 172–184 (PETT…KSES). The next 10 membrane-spanning stretches (helical) occupy residues 303–340 (SSVA…MGKP), 392–423 (RMPL…ANEE), 480–510 (LTRF…VRRS), 523–550 (WWER…ISTL), 555–589 (PRIA…QLKR), 633–670 (WETM…VRFL), 690–710 (VSGN…GAFY), 714–736 (LPAL…VMCC), 751–774 (NFYM…TIVS), and 818–851 (LVLP…KKKL). Positions 874-886 (EQARKAGEQRRNS) are enriched in basic and acidic residues. The segment at 874–935 (EQARKAGEQR…QQPQKNSKKR (62 aa)) is disordered. Composition is skewed to polar residues over residues 899–919 (SHVS…TSSG) and 926–935 (QQPQKNSKKR).

Belongs to the TMC family. In terms of assembly, interacts specifically with isoform CD3 of PCDH15A (via cytoplasmic domain). In terms of tissue distribution, in adults, expression is restricted to the hair cells of inner ear and lateral line organ. Expressed at higher levels in the larval lateral-line neuromasts than in the larval inner ear. Expressed in the sensory hair cell patches of the ear at 4 days post fertilization (dpf).

The protein localises to the cell membrane. It catalyses the reaction Ca(2+)(in) = Ca(2+)(out). Its function is as follows. Pore-forming subunit of the mechanotransducer (MET) non-selective cation channel complex located at the tips of hair-cell stereocilia. Highly permeable to calcium and likely transports monovalent cations. The polypeptide is Transmembrane channel-like protein 1 (Danio rerio (Zebrafish)).